The chain runs to 690 residues: Glycine--tRNA ligase beta subunit (690 aa).

This sequence belongs to the class-II aminoacyl-tRNA synthetase family. Tetramer of two alpha and two beta subunits.

The protein localises to the cytoplasm. The enzyme catalyses tRNA(Gly) + glycine + ATP = glycyl-tRNA(Gly) + AMP + diphosphate. The chain is Glycine--tRNA ligase beta subunit from Proteus mirabilis (strain HI4320).